The primary structure comprises 382 residues: Succinate--CoA ligase [ADP-forming] subunit beta (382 aa).

The region spanning 9 to 240 (KELFAKYGVK…PRDITEFEAY (232 aa)) is the ATP-grasp domain. ATP is bound by residues lysine 45, 52 to 54 (GRG), leucine 94, and glutamate 99. Mg(2+) is bound by residues asparagine 193 and aspartate 207. Substrate contacts are provided by residues asparagine 260 and 317–319 (GIT).

Belongs to the succinate/malate CoA ligase beta subunit family. Heterotetramer of two alpha and two beta subunits. Mg(2+) is required as a cofactor.

It catalyses the reaction succinate + ATP + CoA = succinyl-CoA + ADP + phosphate. It carries out the reaction GTP + succinate + CoA = succinyl-CoA + GDP + phosphate. It participates in carbohydrate metabolism; tricarboxylic acid cycle; succinate from succinyl-CoA (ligase route): step 1/1. In terms of biological role, succinyl-CoA synthetase functions in the citric acid cycle (TCA), coupling the hydrolysis of succinyl-CoA to the synthesis of either ATP or GTP and thus represents the only step of substrate-level phosphorylation in the TCA. The beta subunit provides nucleotide specificity of the enzyme and binds the substrate succinate, while the binding sites for coenzyme A and phosphate are found in the alpha subunit. In Pyrobaculum calidifontis (strain DSM 21063 / JCM 11548 / VA1), this protein is Succinate--CoA ligase [ADP-forming] subunit beta.